Consider the following 258-residue polypeptide: Protease HtpX homolog (258 aa).

Transmembrane regions (helical) follow at residues 24–44 and 45–65; these read VLLF…LGLG and GPLF…LISP. Histidine 146 provides a ligand contact to Zn(2+). The active site involves glutamate 147. Residue histidine 150 participates in Zn(2+) binding. A run of 2 helical transmembrane segments spans residues 157-177 and 186-206; these read IVMT…WSTV and LVGI…LFIS. Glutamate 210 contributes to the Zn(2+) binding site.

The protein belongs to the peptidase M48B family. Zn(2+) serves as cofactor.

The protein resides in the cell membrane. This Methanothermobacter thermautotrophicus (strain ATCC 29096 / DSM 1053 / JCM 10044 / NBRC 100330 / Delta H) (Methanobacterium thermoautotrophicum) protein is Protease HtpX homolog.